Consider the following 315-residue polypeptide: DNA-directed RNA polymerase subunit alpha (315 aa).

Residues M1–S228 form an alpha N-terminal domain (alpha-NTD) region. Positions I238 to S315 are alpha C-terminal domain (alpha-CTD).

This sequence belongs to the RNA polymerase alpha chain family. In cyanobacteria the RNAP catalytic core is composed of 2 alpha, 1 beta, 1 beta', 1 gamma and 1 omega subunit. When a sigma factor is associated with the core the holoenzyme is formed, which can initiate transcription.

The catalysed reaction is RNA(n) + a ribonucleoside 5'-triphosphate = RNA(n+1) + diphosphate. Functionally, DNA-dependent RNA polymerase catalyzes the transcription of DNA into RNA using the four ribonucleoside triphosphates as substrates. In Trichormus variabilis (strain ATCC 29413 / PCC 7937) (Anabaena variabilis), this protein is DNA-directed RNA polymerase subunit alpha.